Here is a 196-residue protein sequence, read N- to C-terminus: RNA-binding protein with multiple splicing (196 aa).

An N-acetylmethionine modification is found at Met1. Thr12 carries the post-translational modification Phosphothreonine. The region spanning 24–101 is the RRM domain; it reads RTLFVSGLPL…QTLRLEFAKA (78 aa). The interval 98–105 is interaction with RNA; that stretch reads FAKANTKM. Thr113 carries the phosphothreonine modification.

Homodimer; each protein chain binds one RNA molecule via the external surface of the homodimer. Interacts with RNA binding proteins MBNL1, RBFOX2, RBM4 and RBM14; the interaction allows cooperative assembly of stable cell-specific alternative splicing regulatory complexes. Interacts with SMAD2, SMAD3 and SMAD4; the interactions are direct. In terms of tissue distribution, ubiquitously expressed, at various levels depending on the isoform and the tissue. Strongly expressed in the heart, prostate, small intestine, large intestine, and ovary; moderately expressed in the placenta, lung, liver, kidney, pancreas, and testis; and poorly expressed in the skeletal muscle, spleen, thymus and peripheral leukocytes.

Its subcellular location is the nucleus. The protein localises to the cytoplasm. The protein resides in the stress granule. It is found in the P-body. Functionally, RNA binding protein that mediates the regulation of pre-mRNA alternative splicing (AS). Acts either as activator (FLNB, HSPG2, LIPA1, MYOCD, PTPRF and PPFIBP1) or repressor (TPM1, ACTN1, ITGA7, PIEZO1, LSM14B, MBNL1 and MBML2) of splicing events on specific pre-mRNA targets. Together with RNA binding proteins RBFOX2 and MBNL1/2, activates a splicing program associated with differentiated contractile vascular smooth muscle cells (SMC) by regulating AS of numerous pre-mRNA involved in actin cytoskeleton and focal adhesion machineries, suggesting a role in promoting a cell differentiated state. Binds to introns, exons and 3'-UTR associated with tandem CAC trinucleotide motifs separated by a variable spacer region, at a minimum as a dimer. The minimal length of RNA required for RBPMS-binding tandem CAC motifs is 15 nt, with spacing ranging from 1 to 9 nt. Can also bind to CA dinucleotide repeats. Mediates repression of TPM1 exon 3 by binding to CAC tandem repeats in the flanking intronic regions, followed by higher-order oligomerization and heterotypic interactions with other splicing regulators including MBNL1 and RBFOX2, which prevents assembly of ATP-dependent splicing complexes. Its function is as follows. Acts as a regulator of pre-mRNA alternative splicing (AS). Binds mRNA. Regulates AS of ACTN1, FLNB, although with lower efficiency than isoform A / RBPMSA. Acts as coactivator of SMAD transcriptional activity in a TGFB1-dependent manner, possibly through increased phosphorylation of SMAD2 and SMAD3 at the C-terminal SSXS regions and promotion of the nuclear accumulation of SMAD proteins. The sequence is that of RNA-binding protein with multiple splicing from Homo sapiens (Human).